Reading from the N-terminus, the 476-residue chain is Proline--tRNA ligase 2 (476 aa).

The protein belongs to the class-II aminoacyl-tRNA synthetase family. ProS type 3 subfamily. As to quaternary structure, homodimer.

The protein resides in the cytoplasm. It catalyses the reaction tRNA(Pro) + L-proline + ATP = L-prolyl-tRNA(Pro) + AMP + diphosphate. Functionally, catalyzes the attachment of proline to tRNA(Pro) in a two-step reaction: proline is first activated by ATP to form Pro-AMP and then transferred to the acceptor end of tRNA(Pro). The chain is Proline--tRNA ligase 2 from Bacillus cereus (strain ZK / E33L).